Consider the following 111-residue polypeptide: Large ribosomal subunit protein uL22 (111 aa).

Belongs to the universal ribosomal protein uL22 family. Part of the 50S ribosomal subunit.

This protein binds specifically to 23S rRNA; its binding is stimulated by other ribosomal proteins, e.g. L4, L17, and L20. It is important during the early stages of 50S assembly. It makes multiple contacts with different domains of the 23S rRNA in the assembled 50S subunit and ribosome. Functionally, the globular domain of the protein is located near the polypeptide exit tunnel on the outside of the subunit, while an extended beta-hairpin is found that lines the wall of the exit tunnel in the center of the 70S ribosome. The polypeptide is Large ribosomal subunit protein uL22 (Geotalea daltonii (strain DSM 22248 / JCM 15807 / FRC-32) (Geobacter daltonii)).